We begin with the raw amino-acid sequence, 78 residues long: Large ribosomal subunit protein bL28 (78 aa).

The protein belongs to the bacterial ribosomal protein bL28 family.

This Legionella pneumophila (strain Paris) protein is Large ribosomal subunit protein bL28.